Consider the following 516-residue polypeptide: Cytochrome P450 1A2 (516 aa).

Ser69 carries O-linked (GlcNAc) serine glycosylation. Residue Phe226 coordinates substrate. Position 458 (Cys458) interacts with heme.

The protein belongs to the cytochrome P450 family. Interacts with PGRMC1; the interaction requires PGRMC1 homodimerization. The cofactor is heme.

It is found in the endoplasmic reticulum membrane. The protein localises to the microsome membrane. The enzyme catalyses an organic molecule + reduced [NADPH--hemoprotein reductase] + O2 = an alcohol + oxidized [NADPH--hemoprotein reductase] + H2O + H(+). The catalysed reaction is 17beta-estradiol + reduced [NADPH--hemoprotein reductase] + O2 = 2-hydroxy-17beta-estradiol + oxidized [NADPH--hemoprotein reductase] + H2O + H(+). It catalyses the reaction 17beta-estradiol + reduced [NADPH--hemoprotein reductase] + O2 = 4-hydroxy-17beta-estradiol + oxidized [NADPH--hemoprotein reductase] + H2O + H(+). It carries out the reaction estrone + reduced [NADPH--hemoprotein reductase] + O2 = 2-hydroxyestrone + oxidized [NADPH--hemoprotein reductase] + H2O + H(+). The enzyme catalyses estrone + reduced [NADPH--hemoprotein reductase] + O2 = 4-hydroxyestrone + oxidized [NADPH--hemoprotein reductase] + H2O + H(+). The catalysed reaction is cholesterol + reduced [NADPH--hemoprotein reductase] + O2 = 25-hydroxycholesterol + oxidized [NADPH--hemoprotein reductase] + H2O + H(+). It catalyses the reaction all-trans-retinol + reduced [NADPH--hemoprotein reductase] + O2 = all-trans-retinal + oxidized [NADPH--hemoprotein reductase] + 2 H2O + H(+). It carries out the reaction all-trans-retinal + reduced [NADPH--hemoprotein reductase] + O2 = all-trans-retinoate + oxidized [NADPH--hemoprotein reductase] + H2O + 2 H(+). The enzyme catalyses (5Z,8Z,11Z,14Z)-eicosatetraenoate + reduced [NADPH--hemoprotein reductase] + O2 = (14R,15S)-epoxy-(5Z,8Z,11Z)-eicosatrienoate + oxidized [NADPH--hemoprotein reductase] + H2O + H(+). The catalysed reaction is (5Z,8Z,11Z,14Z)-eicosatetraenoate + reduced [NADPH--hemoprotein reductase] + O2 = (14S,15R)-epoxy-(5Z,8Z,11Z)-eicosatrienoate + oxidized [NADPH--hemoprotein reductase] + H2O + H(+). It catalyses the reaction (5Z,8Z,11Z,14Z,17Z)-eicosapentaenoate + reduced [NADPH--hemoprotein reductase] + O2 = (17R,18S)-epoxy-(5Z,8Z,11Z,14Z)-eicosatetraenoate + oxidized [NADPH--hemoprotein reductase] + H2O + H(+). It carries out the reaction (4Z,7Z,10Z,13Z,16Z,19Z)-docosahexaenoate + reduced [NADPH--hemoprotein reductase] + O2 = (19R,20S)-epoxy-(4Z,7Z,10Z,13Z,16Z)-docosapentaenoate + oxidized [NADPH--hemoprotein reductase] + H2O + H(+). The enzyme catalyses (5S)-hydroperoxy-(6E,8Z,11Z,14Z)-eicosatetraenoate = 5-oxo-(6E,8Z,11Z,14Z)-eicosatetraenoate + H2O. The catalysed reaction is (12S)-hydroperoxy-(5Z,8Z,10E,14Z)-eicosatetraenoate = 12-oxo-(5Z,8Z,10E,14Z)-eicosatetraenoate + H2O. It catalyses the reaction (15S)-hydroperoxy-(5Z,8Z,11Z,13E)-eicosatetraenoate = 15-oxo-(5Z,8Z,11Z,13E)-eicosatetraenoate + H2O. It carries out the reaction (13S)-hydroperoxy-(9Z,11E)-octadecadienoate = 13-oxo-(9Z,11E)-octadecadienoate + H2O. The enzyme catalyses (5Z,8Z,11Z,14Z)-eicosatetraenoate + reduced [NADPH--hemoprotein reductase] + O2 = 13-hydroxy-(5Z,8Z,11Z,14Z)-eicosatetraenoate + oxidized [NADPH--hemoprotein reductase] + H2O + H(+). The catalysed reaction is (5Z,8Z,11Z,14Z)-eicosatetraenoate + reduced [NADPH--hemoprotein reductase] + O2 = 19-hydroxy-(5Z,8Z,11Z,14Z)-eicosatetraenoate + oxidized [NADPH--hemoprotein reductase] + H2O + H(+). It catalyses the reaction (9Z,12Z)-octadecadienoate + reduced [NADPH--hemoprotein reductase] + O2 = 11-hydroxy-(9Z,12Z)-octadecadienoate + oxidized [NADPH--hemoprotein reductase] + H2O + H(+). It participates in cofactor metabolism; retinol metabolism. The protein operates within steroid metabolism; cholesterol metabolism. Its pathway is lipid metabolism; arachidonate metabolism. Its function is as follows. A cytochrome P450 monooxygenase involved in the metabolism of various endogenous substrates, including fatty acids, steroid hormones and vitamins. Mechanistically, uses molecular oxygen inserting one oxygen atom into a substrate, and reducing the second into a water molecule, with two electrons provided by NADPH via cytochrome P450 reductase (NADPH--hemoprotein reductase). Catalyzes the hydroxylation of carbon-hydrogen bonds. Exhibits high catalytic activity for the formation of hydroxyestrogens from estrone (E1) and 17beta-estradiol (E2), namely 2-hydroxy E1 and E2. Metabolizes cholesterol toward 25-hydroxycholesterol, a physiological regulator of cellular cholesterol homeostasis. May act as a major enzyme for all-trans retinoic acid biosynthesis in the liver. Catalyzes two successive oxidative transformation of all-trans retinol to all-trans retinal and then to the active form all-trans retinoic acid. Primarily catalyzes stereoselective epoxidation of the last double bond of polyunsaturated fatty acids (PUFA), displaying a strong preference for the (R,S) stereoisomer. Catalyzes bisallylic hydroxylation and omega-1 hydroxylation of PUFA. May also participate in eicosanoids metabolism by converting hydroperoxide species into oxo metabolites (lipoxygenase-like reaction, NADPH-independent). Plays a role in the oxidative metabolism of xenobiotics. Catalyzes the N-hydroxylation of heterocyclic amines and the O-deethylation of phenacetin. Metabolizes caffeine via N3-demethylation. In Callithrix jacchus (White-tufted-ear marmoset), this protein is Cytochrome P450 1A2 (CYP1A2).